Here is a 137-residue protein sequence, read N- to C-terminus: Small ribosomal subunit protein uS11 (137 aa).

Disordered regions lie at residues 1–31 (MPPK…AAHI) and 117–137 (TISD…RRRV). Basic residues predominate over residues 12–21 (KTQKARRRDK).

It belongs to the universal ribosomal protein uS11 family. In terms of assembly, part of the 30S ribosomal subunit. Interacts with proteins S7 and S18. Binds to IF-3.

Located on the platform of the 30S subunit, it bridges several disparate RNA helices of the 16S rRNA. Forms part of the Shine-Dalgarno cleft in the 70S ribosome. The protein is Small ribosomal subunit protein uS11 of Rhodococcus jostii (strain RHA1).